Reading from the N-terminus, the 20-residue chain is Photosystem II stability/assembly factor HCF136, chloroplastic (20 aa).

This sequence belongs to the Ycf48 family.

The protein localises to the plastid. It localises to the chloroplast thylakoid lumen. In terms of biological role, essential for photosystem II (PSII) biogenesis; required for assembly of an early intermediate in PSII assembly that includes D2 (psbD) and cytochrome b559. The protein is Photosystem II stability/assembly factor HCF136, chloroplastic of Spinacia oleracea (Spinach).